The following is a 577-amino-acid chain: Aspartate--tRNA ligase (577 aa).

Residue Glu169 coordinates L-aspartate. Residues 193–196 (QLYK) form an aspartate region. Arg215 lines the L-aspartate pocket. Residues 215-217 (RDE) and Gln224 contribute to the ATP site. His440 contributes to the L-aspartate binding site. An ATP-binding site is contributed by Glu474. Arg481 contacts L-aspartate. 526-529 (GIDR) contacts ATP.

It belongs to the class-II aminoacyl-tRNA synthetase family. Type 1 subfamily. Homodimer.

It localises to the cytoplasm. It catalyses the reaction tRNA(Asp) + L-aspartate + ATP = L-aspartyl-tRNA(Asp) + AMP + diphosphate. In terms of biological role, catalyzes the attachment of L-aspartate to tRNA(Asp) in a two-step reaction: L-aspartate is first activated by ATP to form Asp-AMP and then transferred to the acceptor end of tRNA(Asp). This chain is Aspartate--tRNA ligase, found in Mesoplasma florum (strain ATCC 33453 / NBRC 100688 / NCTC 11704 / L1) (Acholeplasma florum).